The chain runs to 133 residues: Holo-[acyl-carrier-protein] synthase (133 aa).

2 residues coordinate Mg(2+): Asp8 and Glu58.

Belongs to the P-Pant transferase superfamily. AcpS family. Requires Mg(2+) as cofactor.

The protein resides in the cytoplasm. It catalyses the reaction apo-[ACP] + CoA = holo-[ACP] + adenosine 3',5'-bisphosphate + H(+). In terms of biological role, transfers the 4'-phosphopantetheine moiety from coenzyme A to a Ser of acyl-carrier-protein. This is Holo-[acyl-carrier-protein] synthase from Erythrobacter litoralis (strain HTCC2594).